A 262-amino-acid polypeptide reads, in one-letter code: Acyl-[acyl-carrier-protein]--UDP-N-acetylglucosamine O-acyltransferase (262 aa).

The protein belongs to the transferase hexapeptide repeat family. LpxA subfamily. As to quaternary structure, homotrimer.

The protein localises to the cytoplasm. It carries out the reaction a (3R)-hydroxyacyl-[ACP] + UDP-N-acetyl-alpha-D-glucosamine = a UDP-3-O-[(3R)-3-hydroxyacyl]-N-acetyl-alpha-D-glucosamine + holo-[ACP]. Its pathway is glycolipid biosynthesis; lipid IV(A) biosynthesis; lipid IV(A) from (3R)-3-hydroxytetradecanoyl-[acyl-carrier-protein] and UDP-N-acetyl-alpha-D-glucosamine: step 1/6. Involved in the biosynthesis of lipid A, a phosphorylated glycolipid that anchors the lipopolysaccharide to the outer membrane of the cell. The polypeptide is Acyl-[acyl-carrier-protein]--UDP-N-acetylglucosamine O-acyltransferase (Burkholderia ambifaria (strain MC40-6)).